We begin with the raw amino-acid sequence, 1357 residues long: MTYSYTEKKRIRKDFGKLPAVMDVPYLLSIQLDSYHDFLQQDVAIEDRQEVGLHAAFKSVFPIVSFSGNAALEYVSYRLGQPVFDVAECQLRGVTYAAPLRVKVRLIIYDKESSTKAIKDIKEQEVYMGEVPLMTENGTFVINGTERVIVSQLHRSPGVFFDHDKGKTHSSGKLLYSARIIPYRGSWLDFEFDPKDCVFVRIDRRRKLPATILLRALGYAADEMLEMFFENSLFEVEGGEYFLDLVPSRLRGDIAIFEIKDDEGNLIVEEGRRVTARHIRQMEKAGLKRLRVPSSYLLGKVTATNIADPSTGEVIVECNTEITDDAIEKIEKAGIKRIETLYTNDLDCGPFVSDTLRIDATRSQLEALVEIYRMMRPGEPPTKESAENLFNNLFFSEERYDLSAVGRMKFNRRLGREETEGLGVLSHSDIIDVLRTLIDIRNGKGVVDDIDHLGNRRVRSVGEMAENQFRVGLVRVERAVKERLSMAESEGLMPQDLINAKPVAAAVKEFFGSSQLSQFMDQNNPLSEVTHKRRVSALGPGGLTRERAGFEVRDVHPTHYGRVCPIETPEGPNIGLINSLATYARTNTYGFLESPYRKVVDGLVTDDIEYLSAIEESDYVIAQASAAVDENGRLIDELVTVRHKNEFTVMPPEKVTLMDVSPRQVVSVAASLIPFLEHDDANRALMGSNMQRQAVPTLKAEKPLVGTGMERYVAQDSGVCVVARRGGVVVSVDAARIVVRVSDDETEAGDAGVDIYNLTKYQRSNQNTCINQRSLVMEGDEVARGDVLADGPSVDLGELALGQNMRIAFMPWNGYNFEDSILVSERVVQEDRFTTIHIQELTCVARDTKLGPEEVTADIPNVGESALAKLDDSGIIYIGAEVEPGDILVGKVTPKGETQLTPEEKLLRAIFGEKASDVKDTSLRVSTGMRGTVIDVQVFTRDGVEKDQRAKEIEQTELNKFRKDLNDEYKIVEGATFERLRSALLGQSVIGGPGLKKGDTLTEVHFNAFEKEEWFKLNMADEQLNELLEKAEGQLQERRKSIEDRYEDKKRKLQSGDDLAPGVLKIVKVYVAVKRRIQPGDKMAGRHGNKGVISAIKPVEDMPYDEQGNPVDIVLNPLGVPSRMNVGQVLETHLGAAAKGLGDKINRMLAEQKQAAEIRKFLHEIYNGIGGRNEDLDSLSDSEVLVLAANLKKGVPMATPVFDGAKEKEIKEMLRLADMDDSGQVWLYDGRTGERFERQVTVGYMYMLKLNHLVDDKMHARSTGSYSLVTQQPLGGKAQFGGQRFGEMEVWALEAYGAAYTLQEMLTVKSDDVNGRTKMYKNIVDGDHRMEPGMPESFNVLVKEIRSLGIDIELEAN.

This sequence belongs to the RNA polymerase beta chain family. The RNAP catalytic core consists of 2 alpha, 1 beta, 1 beta' and 1 omega subunit. When a sigma factor is associated with the core the holoenzyme is formed, which can initiate transcription.

It carries out the reaction RNA(n) + a ribonucleoside 5'-triphosphate = RNA(n+1) + diphosphate. Its function is as follows. DNA-dependent RNA polymerase catalyzes the transcription of DNA into RNA using the four ribonucleoside triphosphates as substrates. In Hahella chejuensis (strain KCTC 2396), this protein is DNA-directed RNA polymerase subunit beta.